A 484-amino-acid chain; its full sequence is tRNA sulfurtransferase (484 aa).

The region spanning 63–167 (EAFADRLSCI…RENLYLVVNR (105 aa)) is the THUMP domain. Residues 185–186 (LI), K267, G289, and Q298 contribute to the ATP site. The cysteines at positions 346 and 458 are disulfide-linked. In terms of domain architecture, Rhodanese spans 406–484 (VNSNEVIIDV…GYENVKVYRP (79 aa)). C458 (cysteine persulfide intermediate) is an active-site residue.

Belongs to the ThiI family.

It is found in the cytoplasm. It carries out the reaction [ThiI sulfur-carrier protein]-S-sulfanyl-L-cysteine + a uridine in tRNA + 2 reduced [2Fe-2S]-[ferredoxin] + ATP + H(+) = [ThiI sulfur-carrier protein]-L-cysteine + a 4-thiouridine in tRNA + 2 oxidized [2Fe-2S]-[ferredoxin] + AMP + diphosphate. The enzyme catalyses [ThiS sulfur-carrier protein]-C-terminal Gly-Gly-AMP + S-sulfanyl-L-cysteinyl-[cysteine desulfurase] + AH2 = [ThiS sulfur-carrier protein]-C-terminal-Gly-aminoethanethioate + L-cysteinyl-[cysteine desulfurase] + A + AMP + 2 H(+). It participates in cofactor biosynthesis; thiamine diphosphate biosynthesis. Its function is as follows. Catalyzes the ATP-dependent transfer of a sulfur to tRNA to produce 4-thiouridine in position 8 of tRNAs, which functions as a near-UV photosensor. Also catalyzes the transfer of sulfur to the sulfur carrier protein ThiS, forming ThiS-thiocarboxylate. This is a step in the synthesis of thiazole, in the thiamine biosynthesis pathway. The sulfur is donated as persulfide by IscS. This chain is tRNA sulfurtransferase, found in Shewanella sediminis (strain HAW-EB3).